A 41-amino-acid chain; its full sequence is Photosystem I reaction center subunit IX (41 aa).

The chain crosses the membrane as a helical span at residues 7–27; it reads YLSTAPVVATGWFIVTAALLI.

This sequence belongs to the PsaJ family.

The protein resides in the plastid. It localises to the chloroplast thylakoid membrane. May help in the organization of the PsaE and PsaF subunits. This Tetradesmus obliquus (Green alga) protein is Photosystem I reaction center subunit IX.